Consider the following 370-residue polypeptide: Pyruvate dehydrogenase E1 component subunit alpha (370 aa).

As to quaternary structure, heterodimer of an alpha and a beta chain. Requires thiamine diphosphate as cofactor.

It carries out the reaction N(6)-[(R)-lipoyl]-L-lysyl-[protein] + pyruvate + H(+) = N(6)-[(R)-S(8)-acetyldihydrolipoyl]-L-lysyl-[protein] + CO2. Functionally, the pyruvate dehydrogenase complex catalyzes the overall conversion of pyruvate to acetyl-CoA and CO(2). It contains multiple copies of three enzymatic components: pyruvate dehydrogenase (E1), dihydrolipoamide acetyltransferase (E2) and lipoamide dehydrogenase (E3). The protein is Pyruvate dehydrogenase E1 component subunit alpha (pdhA) of Staphylococcus aureus (strain COL).